Here is a 56-residue protein sequence, read N- to C-terminus: Large ribosomal subunit protein bL32 (56 aa).

A disordered region spans residues 1–38; the sequence is MAVQQNKKSRSRRDMRRSHDALTTAAVSVDKTSGETHL. Residues 7–16 show a composition bias toward basic residues; the sequence is KKSRSRRDMR.

The protein belongs to the bacterial ribosomal protein bL32 family.

This Histophilus somni (strain 129Pt) (Haemophilus somnus) protein is Large ribosomal subunit protein bL32.